The following is a 116-amino-acid chain: Beta-2-microglobulin (116 aa).

The first 19 residues, 1 to 19, serve as a signal peptide directing secretion; sequence MRAIITFALFCVLYITVQA. The Ig-like C1-type domain occupies 24-111; sequence PKVQVYSHFP…RHMSNTNAYS (88 aa). The cysteines at positions 44 and 99 are disulfide-linked.

The protein belongs to the beta-2-microglobulin family. As to quaternary structure, heterodimer of an alpha chain and a beta chain. Beta-2-microglobulin is the beta-chain of major histocompatibility complex class I molecules.

The protein localises to the secreted. Component of the class I major histocompatibility complex (MHC). Involved in the presentation of peptide antigens to the immune system. The polypeptide is Beta-2-microglobulin (b2m) (Labeobarbus intermedius (Lake tana barbels)).